The primary structure comprises 330 residues: 4-hydroxythreonine-4-phosphate dehydrogenase (330 aa).

Threonine 133 contributes to the substrate binding site. The a divalent metal cation site is built by histidine 161, histidine 206, and histidine 261. Residues lysine 269, asparagine 278, and arginine 287 each contribute to the substrate site.

This sequence belongs to the PdxA family. Homodimer. The cofactor is Zn(2+). Mg(2+) is required as a cofactor. It depends on Co(2+) as a cofactor.

It localises to the cytoplasm. It carries out the reaction 4-(phosphooxy)-L-threonine + NAD(+) = 3-amino-2-oxopropyl phosphate + CO2 + NADH. Its pathway is cofactor biosynthesis; pyridoxine 5'-phosphate biosynthesis; pyridoxine 5'-phosphate from D-erythrose 4-phosphate: step 4/5. Functionally, catalyzes the NAD(P)-dependent oxidation of 4-(phosphooxy)-L-threonine (HTP) into 2-amino-3-oxo-4-(phosphooxy)butyric acid which spontaneously decarboxylates to form 3-amino-2-oxopropyl phosphate (AHAP). The protein is 4-hydroxythreonine-4-phosphate dehydrogenase of Xylella fastidiosa (strain 9a5c).